We begin with the raw amino-acid sequence, 44 residues long: Large ribosomal subunit protein bL34 (44 aa).

Positions 1–26 (MKMTFQPKKRQRAKVHGFRQRMKTAG) are disordered. The segment covering 7–22 (PKKRQRAKVHGFRQRM) has biased composition (basic residues).

This sequence belongs to the bacterial ribosomal protein bL34 family.

This Agathobacter rectalis (strain ATCC 33656 / DSM 3377 / JCM 17463 / KCTC 5835 / VPI 0990) (Eubacterium rectale) protein is Large ribosomal subunit protein bL34.